The primary structure comprises 641 residues: Probable potassium transport system protein Kup (641 aa).

The segment covering 1–14 has biased composition (polar residues); it reads MALDSESSASNRQG. The tract at residues 1–20 is disordered; the sequence is MALDSESSASNRQGSRNEQD. 12 helical membrane passes run 29-49, 69-89, 120-140, 156-176, 188-208, 236-256, 267-287, 307-327, 355-375, 384-404, 410-430, and 437-457; these read LCLT…LYAF, ILSL…LLII, VLIV…MITP, PQLT…LFMV, FGPI…NGII, VLGG…DMGH, FALV…LLLL, LVGL…SGVF, VYVP…VLHF, AFGI…FFVM, WNIL…LAFF, and ITDG…LMIT.

The protein belongs to the HAK/KUP transporter (TC 2.A.72) family.

It localises to the cell inner membrane. The enzyme catalyses K(+)(in) + H(+)(in) = K(+)(out) + H(+)(out). Functionally, transport of potassium into the cell. Likely operates as a K(+):H(+) symporter. This is Probable potassium transport system protein Kup from Nitrosomonas eutropha (strain DSM 101675 / C91 / Nm57).